We begin with the raw amino-acid sequence, 192 residues long: Imidazoleglycerol-phosphate dehydratase (192 aa).

It belongs to the imidazoleglycerol-phosphate dehydratase family.

The protein resides in the cytoplasm. It catalyses the reaction D-erythro-1-(imidazol-4-yl)glycerol 3-phosphate = 3-(imidazol-4-yl)-2-oxopropyl phosphate + H2O. The protein operates within amino-acid biosynthesis; L-histidine biosynthesis; L-histidine from 5-phospho-alpha-D-ribose 1-diphosphate: step 6/9. The protein is Imidazoleglycerol-phosphate dehydratase of Caldivirga maquilingensis (strain ATCC 700844 / DSM 13496 / JCM 10307 / IC-167).